The primary structure comprises 172 residues: Glutamyl-tRNA(Gln) amidotransferase subunit C-4, mitochondrial (172 aa).

The N-terminal 23 residues, 1–23, are a transit peptide targeting the mitochondrion; sequence MIRIPFHLRQTPGRTLHSLVRSF. Residues 51-73 form a disordered region; that stretch reads PSKVPQRPHKSTIDGQSTPTRIP.

Belongs to the GatC family. In terms of assembly, subunit of the heterotrimeric GatCAB amidotransferase (AdT) complex, composed of A, B and C subunits.

The protein resides in the mitochondrion. The enzyme catalyses L-glutamyl-tRNA(Gln) + L-glutamine + ATP + H2O = L-glutaminyl-tRNA(Gln) + L-glutamate + ADP + phosphate + H(+). Functionally, allows the formation of correctly charged Gln-tRNA(Gln) through the transamidation of misacylated Glu-tRNA(Gln) in the mitochondria. The reaction takes place in the presence of glutamine and ATP through an activated gamma-phospho-Glu-tRNA(Gln). The protein is Glutamyl-tRNA(Gln) amidotransferase subunit C-4, mitochondrial of Culex quinquefasciatus (Southern house mosquito).